A 273-amino-acid chain; its full sequence is Putative pyruvate, phosphate dikinase regulatory protein 2 (273 aa).

G151–T158 lines the ADP pocket.

The protein belongs to the pyruvate, phosphate/water dikinase regulatory protein family. PDRP subfamily.

The enzyme catalyses N(tele)-phospho-L-histidyl/L-threonyl-[pyruvate, phosphate dikinase] + ADP = N(tele)-phospho-L-histidyl/O-phospho-L-threonyl-[pyruvate, phosphate dikinase] + AMP + H(+). The catalysed reaction is N(tele)-phospho-L-histidyl/O-phospho-L-threonyl-[pyruvate, phosphate dikinase] + phosphate + H(+) = N(tele)-phospho-L-histidyl/L-threonyl-[pyruvate, phosphate dikinase] + diphosphate. Functionally, bifunctional serine/threonine kinase and phosphorylase involved in the regulation of the pyruvate, phosphate dikinase (PPDK) by catalyzing its phosphorylation/dephosphorylation. The polypeptide is Putative pyruvate, phosphate dikinase regulatory protein 2 (Staphylococcus saprophyticus subsp. saprophyticus (strain ATCC 15305 / DSM 20229 / NCIMB 8711 / NCTC 7292 / S-41)).